The primary structure comprises 355 residues: Peptide chain release factor 1 (355 aa).

At Gln233 the chain carries N5-methylglutamine.

It belongs to the prokaryotic/mitochondrial release factor family. Post-translationally, methylated by PrmC. Methylation increases the termination efficiency of RF1.

Its subcellular location is the cytoplasm. In terms of biological role, peptide chain release factor 1 directs the termination of translation in response to the peptide chain termination codons UAG and UAA. This chain is Peptide chain release factor 1, found in Bacillus cereus (strain ATCC 14579 / DSM 31 / CCUG 7414 / JCM 2152 / NBRC 15305 / NCIMB 9373 / NCTC 2599 / NRRL B-3711).